The chain runs to 691 residues: Elongation factor G (691 aa).

One can recognise a tr-type G domain in the interval 8–283 (EDYRNFGIMA…AVVDYLPSPA (276 aa)). GTP-binding positions include 17–24 (AHIDAGKT), 81–85 (DTPGH), and 135–138 (NKMD).

Belongs to the TRAFAC class translation factor GTPase superfamily. Classic translation factor GTPase family. EF-G/EF-2 subfamily.

The protein resides in the cytoplasm. In terms of biological role, catalyzes the GTP-dependent ribosomal translocation step during translation elongation. During this step, the ribosome changes from the pre-translocational (PRE) to the post-translocational (POST) state as the newly formed A-site-bound peptidyl-tRNA and P-site-bound deacylated tRNA move to the P and E sites, respectively. Catalyzes the coordinated movement of the two tRNA molecules, the mRNA and conformational changes in the ribosome. This is Elongation factor G from Methylobacterium radiotolerans (strain ATCC 27329 / DSM 1819 / JCM 2831 / NBRC 15690 / NCIMB 10815 / 0-1).